Reading from the N-terminus, the 190-residue chain is Probable RNA-binding protein 18 (190 aa).

An RRM domain is found at 25–106 (HRLWIGNLDP…KKLVVRWAHA (82 aa)). The disordered stretch occupies residues 166-190 (VYSYFKPPDKKRTTPYSRTAWKSRR).

This chain is Probable RNA-binding protein 18 (RBM18), found in Bos taurus (Bovine).